A 219-amino-acid polypeptide reads, in one-letter code: Steroid receptor RNA activator 1 (219 aa).

Disordered stretches follow at residues 1 to 90 (MAEL…SSPV) and 192 to 219 (SLSS…QPSS). Over residues 23–32 (YGLQTQTGGT) the composition is skewed to polar residues. Ser-48 carries the post-translational modification Phosphoserine. A compositionally biased stretch (pro residues) spans 55 to 76 (SGPPPVDHPPPSSKASRPPPMG). A compositionally biased stretch (basic and acidic residues) spans 192–203 (SLSSEENKEEKS). Polar residues predominate over residues 206 to 219 (APENQTIPGFQPSS).

It belongs to the SRA1 family. SRA1 RNA exists in a ribonucleoprotein complex containing NCOA1. The RNA also forms a complex with PUS1 and RARG in the nucleus. Interacts with AR. In terms of tissue distribution, expressed in various prostate cancer cell lines.

The protein resides in the nucleus. It is found in the cytoplasm. Its function is as follows. Functional RNA which acts as a transcriptional coactivator that selectively enhances steroid receptor-mediated transactivation ligand-independently through a mechanism involving the modulating N-terminal domain (AF-1) of steroid receptors. Also mediates transcriptional coactivation of steroid receptors ligand-dependently through the steroid-binding domain (AF-2). Enhances cellular proliferation and differentiation and promotes apoptosis in vivo. May play a role in tumorigenesis. The protein is Steroid receptor RNA activator 1 of Rattus norvegicus (Rat).